The chain runs to 504 residues: MEEFQGYLELDIFRQHDFLYPLIFREYSYALGHGHGLNRYMLLENIGYDNKSSLLIVKRLITTMYQQNYLIISANDSKQNPFFGYNKNLHSKILSEGFAIIVEIPFYLRLISSLEGAEIVRFYNLRSIHSIFPFLEEKFPHLNYSADILIPYPAHLEILVQTLRYRVKDASYLHLLRFFLHEYSNCNSLIITNKSISIFSKSNPRFFLFLYNSYICEYESIFLFLRNQSSHLRLTSSGVLFERLCLYRKIEHFAEVFANDFPVIPCFLKDPFMHYVRYQGKSILASKDTPLLMNKWKSYLVNLWQCHFDVWSHAASIRINQLSKHSLDFLSYFSSVRRNPAVVRNQMLENSFLLNNAPNKLDTIVPIIPLIGSLAKAKFCNAVGHPISKLTRADLSDFEIINRFLHICRNLSHYYSGSSKKKNMYRIKYILRLSCVKTLARKHKSTARAFLKRVDSEFFQEFFTEEGGFISLIFPRASFALRRLYSGRVWYLDIIFINGLSNHE.

The protein belongs to the intron maturase 2 family. MatK subfamily.

It localises to the plastid. The protein resides in the chloroplast. Usually encoded in the trnK tRNA gene intron. Probably assists in splicing its own and other chloroplast group II introns. The chain is Maturase K from Quercus petraea (Durmast oak).